The following is a 600-amino-acid chain: Probable pectin methyltransferase QUA3 (600 aa).

Over methionine 1 to arginine 18 the chain is Cytoplasmic. A helical; Signal-anchor for type II membrane protein membrane pass occupies residues leucine 19–phenylalanine 39. The Lumenal segment spans residues threonine 40 to histidine 600. The N-linked (GlcNAc...) asparagine glycan is linked to asparagine 283.

This sequence belongs to the methyltransferase superfamily. As to expression, highly expressed and abundant in suspension-cultured cells, but low levels in seedlings.

The protein localises to the golgi apparatus membrane. It functions in the pathway glycan metabolism; pectin biosynthesis. Its function is as follows. S-adenosyl-L-methionine (SAM)-dependent methyltransferase (MTase) which mediates the methylesterification of the pectin homogalacturonan (HG) and thus regulates cell wall biosynthesis, at least in suspension-cultured cells. This Arabidopsis thaliana (Mouse-ear cress) protein is Probable pectin methyltransferase QUA3.